We begin with the raw amino-acid sequence, 471 residues long: Intraflagellar transport protein 46 homolog (471 aa).

Disordered regions lie at residues 1–202 (MSSE…SNMR) and 226–246 (SRLEDDSSNDDDDDDDDEDDD). 2 stretches are compositionally biased toward acidic residues: residues 89–99 (SEPQEVIDVND) and 231–246 (DSSNDDDDDDDDEDDD).

It belongs to the IFT46 family. In terms of assembly, component of the IFT complex B composed of at least che-2, che-13, dyf-1, dyf-3, dyf-6, dyf-11, dyf-13, ift-20, ift-74, ift-81, ifta-2, osm-1, osm-5 and osm-6. As to expression, expressed in the hypodermis and sensory neurons including inner labial, PDE, amphid and phasmid neurons.

It localises to the cell projection. Its subcellular location is the cilium. The protein localises to the cytoplasm. It is found in the cytoskeleton. The protein resides in the cilium basal body. It localises to the dendrite. Its subcellular location is the perikaryon. Functionally, component of the intraflagellar transport (IFT) complex B required for transport of proteins in the motile cilium. May be required for ciliary entrance and transport of specific ciliary cargo proteins such as che-3 which are related to motility. Required for normal morphology and function of ciliated amphid sensory neurons. This is Intraflagellar transport protein 46 homolog from Caenorhabditis elegans.